A 339-amino-acid polypeptide reads, in one-letter code: RxLR effector protein SFI4 (339 aa).

Residues 1 to 24 (MRVLRVTFLWALLLLVAFSASVYA) form the signal peptide. The RxLR-dEER motif lies at 51–74 (RGLRNSGMKLNDAKDFKGAIAKLR). 4 TPR repeats span residues 106 to 139 (AQILNDYGTVLIRAKQYDEAIEVLEDSVAMVEKI), 190 to 223 (IEASLRIAEGYKKLGNTKKNLKVLKDAVEAQNGE), 232 to 265 (AELYMELSTAHVAVGEIDDALRAAEVASAIFRQR), and 274 to 307 (AFSLNALAGVKMRQKKVDEAIKLLEQAHRIAVQI).

It belongs to the RxLR effector family.

Its subcellular location is the secreted. The protein resides in the host nucleus. It localises to the host cytoplasm. In terms of biological role, effector that suppresses flg22-induced post-translational MAP kinase activation in tomato but not in Arabidopsis. The perception of highly conserved pathogen- or microbe-associated molecular patterns (PAMPs/MAMPs), such as flg22, triggers converging signaling pathways recruiting MAP kinase cascades and inducing transcriptional re-programming, yielding a generic antimicrobial response. This is RxLR effector protein SFI4 from Phytophthora infestans (strain T30-4) (Potato late blight agent).